A 282-amino-acid chain; its full sequence is Phosphatidylserine decarboxylase proenzyme (282 aa).

Catalysis depends on charge relay system; for autoendoproteolytic cleavage activity residues aspartate 88, histidine 144, and serine 247. Serine 247 acts as the Schiff-base intermediate with substrate; via pyruvic acid; for decarboxylase activity in catalysis. Serine 247 bears the Pyruvic acid (Ser); by autocatalysis mark.

Belongs to the phosphatidylserine decarboxylase family. PSD-B subfamily. Prokaryotic type I sub-subfamily. Heterodimer of a large membrane-associated beta subunit and a small pyruvoyl-containing alpha subunit. Pyruvate is required as a cofactor. In terms of processing, is synthesized initially as an inactive proenzyme. Formation of the active enzyme involves a self-maturation process in which the active site pyruvoyl group is generated from an internal serine residue via an autocatalytic post-translational modification. Two non-identical subunits are generated from the proenzyme in this reaction, and the pyruvate is formed at the N-terminus of the alpha chain, which is derived from the carboxyl end of the proenzyme. The autoendoproteolytic cleavage occurs by a canonical serine protease mechanism, in which the side chain hydroxyl group of the serine supplies its oxygen atom to form the C-terminus of the beta chain, while the remainder of the serine residue undergoes an oxidative deamination to produce ammonia and the pyruvoyl prosthetic group on the alpha chain. During this reaction, the Ser that is part of the protease active site of the proenzyme becomes the pyruvoyl prosthetic group, which constitutes an essential element of the active site of the mature decarboxylase.

It is found in the cell membrane. It carries out the reaction a 1,2-diacyl-sn-glycero-3-phospho-L-serine + H(+) = a 1,2-diacyl-sn-glycero-3-phosphoethanolamine + CO2. The protein operates within phospholipid metabolism; phosphatidylethanolamine biosynthesis; phosphatidylethanolamine from CDP-diacylglycerol: step 2/2. Its function is as follows. Catalyzes the formation of phosphatidylethanolamine (PtdEtn) from phosphatidylserine (PtdSer). The protein is Phosphatidylserine decarboxylase proenzyme of Xanthomonas oryzae pv. oryzae (strain KACC10331 / KXO85).